A 389-amino-acid chain; its full sequence is Succinate--CoA ligase [ADP-forming] subunit beta (389 aa).

Residues 9-236 (RDMFEAHGVP…KDAADPLEAK (228 aa)) enclose the ATP-grasp domain. Residues K45, 52–54 (GRG), A94, and E99 each bind ATP. Mg(2+) is bound by residues N191 and D205. Residues N256 and 318–320 (GIT) each bind substrate.

This sequence belongs to the succinate/malate CoA ligase beta subunit family. Heterotetramer of two alpha and two beta subunits. Mg(2+) serves as cofactor.

It carries out the reaction succinate + ATP + CoA = succinyl-CoA + ADP + phosphate. The catalysed reaction is GTP + succinate + CoA = succinyl-CoA + GDP + phosphate. It functions in the pathway carbohydrate metabolism; tricarboxylic acid cycle; succinate from succinyl-CoA (ligase route): step 1/1. Its function is as follows. Succinyl-CoA synthetase functions in the citric acid cycle (TCA), coupling the hydrolysis of succinyl-CoA to the synthesis of either ATP or GTP and thus represents the only step of substrate-level phosphorylation in the TCA. The beta subunit provides nucleotide specificity of the enzyme and binds the substrate succinate, while the binding sites for coenzyme A and phosphate are found in the alpha subunit. The polypeptide is Succinate--CoA ligase [ADP-forming] subunit beta (Arthrobacter sp. (strain FB24)).